A 208-amino-acid chain; its full sequence is Uracil phosphoribosyltransferase (208 aa).

Residues Arg-78, Arg-103, and 130-138 (DPMLATGGS) contribute to the 5-phospho-alpha-D-ribose 1-diphosphate site. Uracil contacts are provided by residues Ile-193 and 198 to 200 (GDA). Asp-199 contributes to the 5-phospho-alpha-D-ribose 1-diphosphate binding site.

Belongs to the UPRTase family. The cofactor is Mg(2+).

The enzyme catalyses UMP + diphosphate = 5-phospho-alpha-D-ribose 1-diphosphate + uracil. It functions in the pathway pyrimidine metabolism; UMP biosynthesis via salvage pathway; UMP from uracil: step 1/1. With respect to regulation, allosterically activated by GTP. In terms of biological role, catalyzes the conversion of uracil and 5-phospho-alpha-D-ribose 1-diphosphate (PRPP) to UMP and diphosphate. This is Uracil phosphoribosyltransferase from Shewanella piezotolerans (strain WP3 / JCM 13877).